A 590-amino-acid chain; its full sequence is Aspartate--tRNA ligase (590 aa).

Glu-180 lines the L-aspartate pocket. Positions 204 to 207 are aspartate; it reads QLFK. L-aspartate is bound at residue Arg-226. ATP-binding positions include 226 to 228 and Gln-235; that span reads RDE. L-aspartate is bound at residue His-454. Glu-488 is a binding site for ATP. Arg-495 serves as a coordination point for L-aspartate. Residue 540 to 543 participates in ATP binding; it reads GFDR.

Belongs to the class-II aminoacyl-tRNA synthetase family. Type 1 subfamily. In terms of assembly, homodimer.

The protein localises to the cytoplasm. The enzyme catalyses tRNA(Asp) + L-aspartate + ATP = L-aspartyl-tRNA(Asp) + AMP + diphosphate. Functionally, catalyzes the attachment of L-aspartate to tRNA(Asp) in a two-step reaction: L-aspartate is first activated by ATP to form Asp-AMP and then transferred to the acceptor end of tRNA(Asp). The protein is Aspartate--tRNA ligase of Clostridium kluyveri (strain NBRC 12016).